Here is a 234-residue protein sequence, read N- to C-terminus: 2-C-methyl-D-erythritol 4-phosphate cytidylyltransferase (234 aa).

This sequence belongs to the IspD/TarI cytidylyltransferase family. IspD subfamily.

It catalyses the reaction 2-C-methyl-D-erythritol 4-phosphate + CTP + H(+) = 4-CDP-2-C-methyl-D-erythritol + diphosphate. Its pathway is isoprenoid biosynthesis; isopentenyl diphosphate biosynthesis via DXP pathway; isopentenyl diphosphate from 1-deoxy-D-xylulose 5-phosphate: step 2/6. Its function is as follows. Catalyzes the formation of 4-diphosphocytidyl-2-C-methyl-D-erythritol from CTP and 2-C-methyl-D-erythritol 4-phosphate (MEP). The chain is 2-C-methyl-D-erythritol 4-phosphate cytidylyltransferase from Pseudomonas paraeruginosa (strain DSM 24068 / PA7) (Pseudomonas aeruginosa (strain PA7)).